Here is a 444-residue protein sequence, read N- to C-terminus: tRNA modification GTPase MnmE (444 aa).

Positions 25, 83, and 122 each coordinate (6S)-5-formyl-5,6,7,8-tetrahydrofolate. The 153-residue stretch at 218-370 (GFKVAIVGKP…IVGRLRDYLD (153 aa)) folds into the TrmE-type G domain. GTP is bound by residues 228–233 (NVGKSS), 247–253 (SDEAGTT), and 272–275 (DTAG). Ser-232 and Thr-253 together coordinate Mg(2+). Lys-444 contacts (6S)-5-formyl-5,6,7,8-tetrahydrofolate.

Belongs to the TRAFAC class TrmE-Era-EngA-EngB-Septin-like GTPase superfamily. TrmE GTPase family. In terms of assembly, homodimer. Heterotetramer of two MnmE and two MnmG subunits. K(+) serves as cofactor.

It localises to the cytoplasm. Its function is as follows. Exhibits a very high intrinsic GTPase hydrolysis rate. Involved in the addition of a carboxymethylaminomethyl (cmnm) group at the wobble position (U34) of certain tRNAs, forming tRNA-cmnm(5)s(2)U34. In Campylobacter curvus (strain 525.92), this protein is tRNA modification GTPase MnmE.